A 417-amino-acid polypeptide reads, in one-letter code: MLEQMGIAAKQASYKLAQLSSREKNRVLEKIADELEAQSESILNANAQDVADARANGLSEAMLDRLALTPARLKGIADDVRQVCNLADPVGQVIDGGVLDSGLRLERRRVPLGVIGVIYEARPNVTVDVASLCLKTGNAVILRGGKETCRTNAATVAVIQDALKSCGLPAGAVQAIDNPDRALVSEMLRMDKYIDMLIPRGGAGLHKLCREQSTIPVITGGIGVCHIYVDESAEIAEALKVIVNAKTQRPSTCNTVETLLVNKNIADSFLPALSKQMAESGVTLHADAAALAQLQAGPAKVVAVKAEEYDDEFLSLDLNVKIVSDLDDAIAHIREHGTQHSDAILTRDMRNAQRFVNEVDSSAVYVNASTRFTDGGQFGLGAEVAVSTQKLHARGPMGLEALTTYKWIGIGDYTIRA.

Belongs to the gamma-glutamyl phosphate reductase family.

It is found in the cytoplasm. The enzyme catalyses L-glutamate 5-semialdehyde + phosphate + NADP(+) = L-glutamyl 5-phosphate + NADPH + H(+). It functions in the pathway amino-acid biosynthesis; L-proline biosynthesis; L-glutamate 5-semialdehyde from L-glutamate: step 2/2. Catalyzes the NADPH-dependent reduction of L-glutamate 5-phosphate into L-glutamate 5-semialdehyde and phosphate. The product spontaneously undergoes cyclization to form 1-pyrroline-5-carboxylate. This chain is Gamma-glutamyl phosphate reductase, found in Escherichia coli O45:K1 (strain S88 / ExPEC).